A 123-amino-acid polypeptide reads, in one-letter code: Ig heavy chain V region HPCM6 (123 aa).

The Ig-like domain maps to 1 to 114 (EVKLVESGGG…YPHWYFDVWG (114 aa)).

The protein is Ig heavy chain V region HPCM6 of Mus musculus (Mouse).